The chain runs to 658 residues: Probable replication factor A 73 kDa subunit (658 aa).

2 disordered regions span residues 134-155 and 169-222; these read PEVKPRSHSGNPAEHHGYRPNI and SEFQ…TERG. A DNA-binding region (OB) is located at residues 236-326; that stretch reads FRIHGMVSRK…TLRNDSVVEA (91 aa). The segment at 518-539 adopts a C4-type zinc-finger fold; that stretch reads CASEGCQKKVIESDGEYRCEKC.

Belongs to the replication factor A protein 1 family. As to quaternary structure, component of the heterotrimeric canonical replication protein A complex (RPA).

The protein resides in the nucleus. In terms of biological role, as part of the heterotrimeric replication protein A complex (RPA/RP-A), binds and stabilizes single-stranded DNA intermediates, that form during DNA replication or upon DNA stress. It prevents their reannealing and in parallel, recruits and activates different proteins and complexes involved in DNA metabolism. Thereby, it plays an essential role both in DNA replication and the cellular response to DNA damage. The polypeptide is Probable replication factor A 73 kDa subunit (Caenorhabditis briggsae).